We begin with the raw amino-acid sequence, 297 residues long: tRNA pseudouridine synthase B (297 aa).

Asp39 serves as the catalytic Nucleophile.

The protein belongs to the pseudouridine synthase TruB family. Type 1 subfamily.

The catalysed reaction is uridine(55) in tRNA = pseudouridine(55) in tRNA. Responsible for synthesis of pseudouridine from uracil-55 in the psi GC loop of transfer RNAs. This Lactobacillus gasseri (strain ATCC 33323 / DSM 20243 / BCRC 14619 / CIP 102991 / JCM 1131 / KCTC 3163 / NCIMB 11718 / NCTC 13722 / AM63) protein is tRNA pseudouridine synthase B.